An 87-amino-acid polypeptide reads, in one-letter code: Mu-theraphotoxin-Hs1a (87 aa).

Positions 1–24 are cleaved as a signal peptide; sequence MVNMKASMFLTFAGLVLLFVVCYA. The propeptide occupies 25 to 52; the sequence is SESEEKEFPKEMLSSIFAVDNDFKQEER. 3 disulfides stabilise this stretch: Cys54–Cys67, Cys61–Cys72, and Cys66–Cys79.

Belongs to the neurotoxin 10 (Hwtx-1) family. 51 (Hntx-8) subfamily. Hntx-8 sub-subfamily. As to expression, expressed by the venom gland.

The protein localises to the secreted. Its function is as follows. Probable sodium channel pore blocker that dose-dependently inhibits voltage-gated sodium channels (VGSC) on DUM neurons in a way similar to tetrodotoxin. Has no effect on the kinetics of activation and inactivation. Seems not to interact with VGSC in an inactivated state. In vivo, reversibly paralyzes cockroaches, and can enhance the muscular contraction elicited by stimulating its nerve. The protein is Mu-theraphotoxin-Hs1a of Cyriopagopus schmidti (Chinese bird spider).